The following is a 309-amino-acid chain: Peptide methionine sulfoxide reductase MsrA/MsrB (309 aa).

Residues 1 to 153 (MIYLAGGCFW…PNGYCHIDIN (153 aa)) form a peptide methionine sulfoxide reductase A region. The active site involves C8. The MsrB domain maps to 170 to 293 (ATEIKEKLSA…NSLSITFIPK (124 aa)). The Nucleophile role is filled by C282.

It in the N-terminal section; belongs to the MsrA Met sulfoxide reductase family. The protein in the C-terminal section; belongs to the MsrB Met sulfoxide reductase family.

The catalysed reaction is L-methionyl-[protein] + [thioredoxin]-disulfide + H2O = L-methionyl-(S)-S-oxide-[protein] + [thioredoxin]-dithiol. It catalyses the reaction [thioredoxin]-disulfide + L-methionine + H2O = L-methionine (S)-S-oxide + [thioredoxin]-dithiol. It carries out the reaction L-methionyl-[protein] + [thioredoxin]-disulfide + H2O = L-methionyl-(R)-S-oxide-[protein] + [thioredoxin]-dithiol. In terms of biological role, has an important function as a repair enzyme for proteins that have been inactivated by oxidation. Catalyzes the reversible oxidation-reduction of methionine sulfoxide in proteins to methionine. The polypeptide is Peptide methionine sulfoxide reductase MsrA/MsrB (msrAB) (Streptococcus pyogenes serotype M1).